Here is a 295-residue protein sequence, read N- to C-terminus: MAVLAPLIALVYSVPRLSRWLARPYCLLSALLSIAFLLVRKLPPICNGLPTQREDGNPCDFDWREVEILMFLSAIVMMKNRRSITVEQHVGNIFMFSKVANAILFFRLDIRMGLLYLTLCIVFLMTCKPPLYMGPEYIKYFNDKTIDEELERDKRVTWIVEFFANWSNDCQSFAPIYADLSLKYNCSGLNFGKVDVGRYTDVSTRYKVSTSPLTKQLPTLILFQGGKEVMRRPQIDKKGRAVSWTFSEENVIREFNLNELYQRAKKLSKGGDMSEEKPGNPTPTAVPDGENKKDK.

The signal sequence occupies residues 1-48 (MAVLAPLIALVYSVPRLSRWLARPYCLLSALLSIAFLLVRKLPPICNG). The Extracellular segment spans residues 49–102 (LPTQREDGNPCDFDWREVEILMFLSAIVMMKNRRSITVEQHVGNIFMFSKVANA). Residues 103–125 (ILFFRLDIRMGLLYLTLCIVFLM) form a helical membrane-spanning segment. The Thioredoxin domain maps to 114-269 (LLYLTLCIVF…LYQRAKKLSK (156 aa)). At 126-295 (TCKPPLYMGP…VPDGENKKDK (170 aa)) the chain is on the cytoplasmic side. Residues Ser211 and Ser243 each carry the phosphoserine modification. A disordered region spans residues 266–295 (KLSKGGDMSEEKPGNPTPTAVPDGENKKDK). The Di-lysine motif signature appears at 292–295 (KKDK).

As to quaternary structure, monomer. Homodimer; disulfide-linked. Occurs in both reduced and oxidized monomeric form. Oxidative conditions increase homodimerization. Interacts with CANX. Interacts with ATP2A2.

Its subcellular location is the endoplasmic reticulum membrane. The protein resides in the mitochondrion membrane. Functionally, endoplasmic reticulum and mitochondria-associated protein that probably functions as a regulator of cellular redox state and thereby regulates protein post-translational modification, protein folding and mitochondrial activity. Indirectly regulates neuronal proliferation, migration, and organization in the developing brain. This Rattus norvegicus (Rat) protein is Thioredoxin-related transmembrane protein 2 (Tmx2).